A 975-amino-acid polypeptide reads, in one-letter code: 5'-3' exoribonuclease 2 homolog (975 aa).

Residues 262–279 form a CCHC-type zinc finger; it reads RACDLCGQYGHELKECRG. 2 disordered regions span residues 424–443 and 505–532; these read MQMY…GRGQ and SPAD…EGPK. The interval 534 to 787 is interaction with paxt-1; the sequence is DIRLYESGWK…GICVLYEDPE (254 aa). The segment covering 804-821 has biased composition (basic and acidic residues); that stretch reads EPEKTLKPDDWNDRRDGR. The tract at residues 804-975 is disordered; sequence EPEKTLKPDD…GGYHGNSSWR (172 aa). 3 stretches are compositionally biased toward gly residues: residues 850–860, 886–895, and 908–932; these read RGGGGGGGGYR, NYGGRDGGGP, and GYQG…GGGS.

The protein belongs to the 5'-3' exonuclease family. XRN2/RAT1 subfamily. As to quaternary structure, interacts with paxt-1 (via N-terminus); the interaction is direct and results in stabilization of xrn-2 in the complex. In terms of tissue distribution, expressed in the pharyngeal myoepithelium and intestine. Also expressed in several anterior neurons including the sensory neurons, as well as the interneuron PVT and the pharyngeal motorneuron M5.

The protein localises to the nucleus. Possesses 5'-&gt;3' exoribonuclease activity. Plays a role in maintenance of steady-state concentration and turnover of microRNAs (miRNA) by degradation of mature miRNA. Degradation role is enhanced when in complex with paxt-1. Partially redundant to xrn-1 in miRNA guide strand degradation. Implicated in differential regulation of mRNAs such as let-7 by controlling the accumulation of mature miRNA. Positively regulates molting of the pharyngeal cuticle. This Caenorhabditis elegans protein is 5'-3' exoribonuclease 2 homolog.